A 210-amino-acid polypeptide reads, in one-letter code: Large ribosomal subunit protein uL3 (210 aa).

Residues 131-165 form a disordered region; that stretch reads GPMSHGSKYHRRVGSMGATTDPGRTFKGKKMPGRM.

This sequence belongs to the universal ribosomal protein uL3 family. As to quaternary structure, part of the 50S ribosomal subunit. Forms a cluster with proteins L14 and L19.

Its function is as follows. One of the primary rRNA binding proteins, it binds directly near the 3'-end of the 23S rRNA, where it nucleates assembly of the 50S subunit. In Caldanaerobacter subterraneus subsp. tengcongensis (strain DSM 15242 / JCM 11007 / NBRC 100824 / MB4) (Thermoanaerobacter tengcongensis), this protein is Large ribosomal subunit protein uL3.